Consider the following 294-residue polypeptide: Eukaryotic translation initiation factor 3 subunit F (294 aa).

In terms of domain architecture, MPN spans 20-163 (VTVTAQALFQ…IDPSKNSGNC (144 aa)).

Belongs to the eIF-3 subunit F family. Component of the eukaryotic translation initiation factor 3 (eIF-3) complex.

It localises to the cytoplasm. Functionally, component of the eukaryotic translation initiation factor 3 (eIF-3) complex, which is involved in protein synthesis of a specialized repertoire of mRNAs and, together with other initiation factors, stimulates binding of mRNA and methionyl-tRNAi to the 40S ribosome. The eIF-3 complex specifically targets and initiates translation of a subset of mRNAs involved in cell proliferation. The protein is Eukaryotic translation initiation factor 3 subunit F of Yarrowia lipolytica (strain CLIB 122 / E 150) (Yeast).